The chain runs to 292 residues: NAD(P)H-hydrate epimerase (292 aa).

Residues Met-1–Thr-52 constitute a mitochondrion transit peptide. One can recognise a YjeF N-terminal domain in the interval Ala-68 to Leu-279. Residue Asn-122–Asp-126 coordinates (6S)-NADPHX. K(+) contacts are provided by Asn-123 and Asp-189. Residues Gly-193–Ala-199 and Asp-222 contribute to the (6S)-NADPHX site. Ser-225 serves as a coordination point for K(+).

It belongs to the NnrE/AIBP family. It depends on K(+) as a cofactor.

Its subcellular location is the mitochondrion. The protein localises to the secreted. It carries out the reaction (6R)-NADHX = (6S)-NADHX. The catalysed reaction is (6R)-NADPHX = (6S)-NADPHX. Catalyzes the epimerization of the S- and R-forms of NAD(P)HX, a damaged form of NAD(P)H that is a result of enzymatic or heat-dependent hydration. This is a prerequisite for the S-specific NAD(P)H-hydrate dehydratase to allow the repair of both epimers of NAD(P)HX. This Xenopus tropicalis (Western clawed frog) protein is NAD(P)H-hydrate epimerase.